Consider the following 84-residue polypeptide: Subtilisin-chymotrypsin inhibitor-2A (84 aa).

The tract at residues 1-23 is disordered; that stretch reads MSSVEKKPEGVNTGAGDRHNLKT.

This sequence belongs to the protease inhibitor I13 (potato type I serine protease inhibitor) family.

Functionally, inhibits both subtilisin and chymotrypsin. The polypeptide is Subtilisin-chymotrypsin inhibitor-2A (Hordeum vulgare (Barley)).